Consider the following 358-residue polypeptide: tRNA N6-adenosine threonylcarbamoyltransferase (358 aa).

Positions 111 and 115 each coordinate Fe cation. Substrate contacts are provided by residues 146–150 (LVSGG), Asp-179, Gly-192, and Asn-294. Asp-322 contributes to the Fe cation binding site.

The protein belongs to the KAE1 / TsaD family. The cofactor is Fe(2+).

It localises to the cytoplasm. The catalysed reaction is L-threonylcarbamoyladenylate + adenosine(37) in tRNA = N(6)-L-threonylcarbamoyladenosine(37) in tRNA + AMP + H(+). Its function is as follows. Required for the formation of a threonylcarbamoyl group on adenosine at position 37 (t(6)A37) in tRNAs that read codons beginning with adenine. Is involved in the transfer of the threonylcarbamoyl moiety of threonylcarbamoyl-AMP (TC-AMP) to the N6 group of A37, together with TsaE and TsaB. TsaD likely plays a direct catalytic role in this reaction. The sequence is that of tRNA N6-adenosine threonylcarbamoyltransferase from Helicobacter hepaticus (strain ATCC 51449 / 3B1).